The chain runs to 147 residues: Phosphoribosyl-AMP cyclohydrolase (147 aa).

Aspartate 89 serves as a coordination point for Mg(2+). Position 90 (cysteine 90) interacts with Zn(2+). 2 residues coordinate Mg(2+): aspartate 91 and aspartate 93. Residues cysteine 106 and cysteine 113 each contribute to the Zn(2+) site.

It belongs to the PRA-CH family. As to quaternary structure, homodimer. The cofactor is Mg(2+). Zn(2+) is required as a cofactor.

The protein resides in the cytoplasm. The catalysed reaction is 1-(5-phospho-beta-D-ribosyl)-5'-AMP + H2O = 1-(5-phospho-beta-D-ribosyl)-5-[(5-phospho-beta-D-ribosylamino)methylideneamino]imidazole-4-carboxamide. The protein operates within amino-acid biosynthesis; L-histidine biosynthesis; L-histidine from 5-phospho-alpha-D-ribose 1-diphosphate: step 3/9. In terms of biological role, catalyzes the hydrolysis of the adenine ring of phosphoribosyl-AMP. In Nitrobacter hamburgensis (strain DSM 10229 / NCIMB 13809 / X14), this protein is Phosphoribosyl-AMP cyclohydrolase.